The following is a 113-amino-acid chain: Hydrogenase maturation factor HybF (113 aa).

The Ni(2+) site is built by H2 and E3. Zn(2+)-binding residues include C73, C76, C89, and C92.

It belongs to the HypA/HybF family. HybF subfamily.

Its function is as follows. Involved in the maturation of [NiFe] hydrogenases. Required for nickel insertion into the metal center of the hydrogenase. The chain is Hydrogenase maturation factor HybF from Klebsiella pneumoniae.